A 249-amino-acid polypeptide reads, in one-letter code: MIKHLAEALRFLTILPIPGKPALSEQALVRSMVAFPLAGTLIGGLVAATWFGATWLWGTTTGSLCAILTWGAITSGLHLDGIADSADALFSWRSRERKLEIMKDSRIGTMGAIALISILLLKWLFVLGCGDLAWRALIVAPTLGRWVDIIGIFWFPPAAEGGLGRTFHDHTRRSDFWWATSCAGLVAAGLLWWWAGLIFAVVIVATIIIARWMVRSLGGLTGDTYGALCEIAEMLVLAVVAALVNHQVL.

Transmembrane regions (helical) follow at residues 32–52, 53–73, 107–127, 136–156, 190–210, and 224–244; these read MVAF…TWFG, ATWL…WGAI, IGTM…LFVL, ALIV…FWFP, LLWW…IIIA, and TYGA…AALV.

Belongs to the CobS family. Mg(2+) serves as cofactor.

It localises to the cell membrane. It catalyses the reaction alpha-ribazole + adenosylcob(III)inamide-GDP = adenosylcob(III)alamin + GMP + H(+). The catalysed reaction is alpha-ribazole 5'-phosphate + adenosylcob(III)inamide-GDP = adenosylcob(III)alamin 5'-phosphate + GMP + H(+). Its pathway is cofactor biosynthesis; adenosylcobalamin biosynthesis; adenosylcobalamin from cob(II)yrinate a,c-diamide: step 7/7. Its function is as follows. Joins adenosylcobinamide-GDP and alpha-ribazole to generate adenosylcobalamin (Ado-cobalamin). Also synthesizes adenosylcobalamin 5'-phosphate from adenosylcobinamide-GDP and alpha-ribazole 5'-phosphate. The chain is Adenosylcobinamide-GDP ribazoletransferase from Herpetosiphon aurantiacus (strain ATCC 23779 / DSM 785 / 114-95).